Reading from the N-terminus, the 318-residue chain is Ribosomal RNA small subunit methyltransferase H (318 aa).

Residues 34 to 36, Asp57, Leu91, Asp110, and Gln117 contribute to the S-adenosyl-L-methionine site; that span reads GGH.

It belongs to the methyltransferase superfamily. RsmH family.

It is found in the cytoplasm. It carries out the reaction cytidine(1402) in 16S rRNA + S-adenosyl-L-methionine = N(4)-methylcytidine(1402) in 16S rRNA + S-adenosyl-L-homocysteine + H(+). In terms of biological role, specifically methylates the N4 position of cytidine in position 1402 (C1402) of 16S rRNA. In Chlorobaculum parvum (strain DSM 263 / NCIMB 8327) (Chlorobium vibrioforme subsp. thiosulfatophilum), this protein is Ribosomal RNA small subunit methyltransferase H.